An 802-amino-acid chain; its full sequence is Leucine--tRNA ligase (802 aa).

The short motif at 40–51 (PYPSGAGLHVGH) is the 'HIGH' region element. Residues 576–580 (KMSKS) carry the 'KMSKS' region motif. Lys579 provides a ligand contact to ATP.

The protein belongs to the class-I aminoacyl-tRNA synthetase family.

It is found in the cytoplasm. The catalysed reaction is tRNA(Leu) + L-leucine + ATP = L-leucyl-tRNA(Leu) + AMP + diphosphate. In Bacillus thuringiensis subsp. konkukian (strain 97-27), this protein is Leucine--tRNA ligase.